We begin with the raw amino-acid sequence, 263 residues long: Phosphatidylglycerol--prolipoprotein diacylglyceryl transferase (263 aa).

The next 4 membrane-spanning stretches (helical) occupy residues 16-36 (LAVSWYSLSYVVGILFGWFYA), 55-75 (FVTYAIIGIIVGGRLGYILLY), 92-112 (EGGMSFHGGAIGVIIAAYIFC), and 117-137 (LNFLSLTDIIAPVVPIGLFFG). Arg138 contributes to the a 1,2-diacyl-sn-glycero-3-phospho-(1'-sn-glycerol) binding site. The next 3 helical transmembrane spans lie at 172–192 (QLYEAFFEGLVLFCILAYAVF), 201–221 (GLNSGLFLMFYSLFRIIIEIF), and 234–254 (SLTMGQILSMPLLLLGIYLII).

This sequence belongs to the Lgt family.

It localises to the cell inner membrane. It carries out the reaction L-cysteinyl-[prolipoprotein] + a 1,2-diacyl-sn-glycero-3-phospho-(1'-sn-glycerol) = an S-1,2-diacyl-sn-glyceryl-L-cysteinyl-[prolipoprotein] + sn-glycerol 1-phosphate + H(+). The protein operates within protein modification; lipoprotein biosynthesis (diacylglyceryl transfer). Its function is as follows. Catalyzes the transfer of the diacylglyceryl group from phosphatidylglycerol to the sulfhydryl group of the N-terminal cysteine of a prolipoprotein, the first step in the formation of mature lipoproteins. The chain is Phosphatidylglycerol--prolipoprotein diacylglyceryl transferase from Rickettsia bellii (strain OSU 85-389).